Reading from the N-terminus, the 451-residue chain is UDP-N-acetylmuramoylalanine--D-glutamate ligase (451 aa).

120-126 (GSNGKTT) contacts ATP.

It belongs to the MurCDEF family.

The protein localises to the cytoplasm. The enzyme catalyses UDP-N-acetyl-alpha-D-muramoyl-L-alanine + D-glutamate + ATP = UDP-N-acetyl-alpha-D-muramoyl-L-alanyl-D-glutamate + ADP + phosphate + H(+). The protein operates within cell wall biogenesis; peptidoglycan biosynthesis. Functionally, cell wall formation. Catalyzes the addition of glutamate to the nucleotide precursor UDP-N-acetylmuramoyl-L-alanine (UMA). The polypeptide is UDP-N-acetylmuramoylalanine--D-glutamate ligase (Bacillus velezensis (strain DSM 23117 / BGSC 10A6 / LMG 26770 / FZB42) (Bacillus amyloliquefaciens subsp. plantarum)).